The chain runs to 1033 residues: PDZ domain-containing protein 7 (1033 aa).

PDZ domains follow at residues 86–168 (SVRV…RMGR) and 210–293 (IVHL…ETGR). A compositionally biased stretch (low complexity) spans 323–344 (ESSSSVSSCASSAPYSSGSLPS). Disordered regions lie at residues 323-380 (ESSS…GGRV), 444-464 (KQQR…LQRS), 754-864 (EPLS…KTVT), and 943-1033 (MELV…PRIP). Positions 770–784 (AQSRSRSRSRSRSRS) are enriched in basic residues. The span at 785 to 797 (SRGQGKSPGRRSP) shows a compositional bias: low complexity. In terms of domain architecture, PDZ 3 spans 862–934 (TVTLSKMKQS…QRAVDTIRRA (73 aa)). A compositionally biased stretch (pro residues) spans 991–1000 (PEPPTNPQTP).

As to quaternary structure, homodimerizes (via PDZ2 domain). Component of USH2 complex, composed of ADGRV1, PDZD7, USH2A and WHRN. Interacts (via PDZ domains) with WHRN; the interaction is direct. Interacts with USH1G. Interacts with ADGRV1 (via the cytoplasmic region). Interacts with USH2A (via the cytoplasmic region). Interacts with MYO7A (via MyTH4-FERM domains). In terms of tissue distribution, weakly expressed in the inner ear. Expressed in the retinal pigment epithelium.

The protein localises to the cell projection. The protein resides in the cilium. It is found in the nucleus. Its subcellular location is the stereocilium. Its function is as follows. In cochlear developing hair cells, essential in organizing the USH2 complex at stereocilia ankle links. Blocks inhibition of adenylate cyclase activity mediated by ADGRV1. The sequence is that of PDZ domain-containing protein 7 from Homo sapiens (Human).